A 306-amino-acid polypeptide reads, in one-letter code: Recombination-associated protein RdgC (306 aa).

It belongs to the RdgC family.

It is found in the cytoplasm. The protein localises to the nucleoid. In terms of biological role, may be involved in recombination. This is Recombination-associated protein RdgC from Pseudomonas fluorescens (strain SBW25).